The following is a 251-amino-acid chain: Triosephosphate isomerase (251 aa).

12 to 14 is a substrate binding site; sequence NWK. Residue histidine 99 is the Electrophile of the active site. Catalysis depends on glutamate 169, which acts as the Proton acceptor. Substrate-binding positions include glycine 175, serine 214, and 235–236; that span reads GG.

Belongs to the triosephosphate isomerase family. As to quaternary structure, homodimer.

The protein localises to the cytoplasm. It carries out the reaction D-glyceraldehyde 3-phosphate = dihydroxyacetone phosphate. It functions in the pathway carbohydrate biosynthesis; gluconeogenesis. Its pathway is carbohydrate degradation; glycolysis; D-glyceraldehyde 3-phosphate from glycerone phosphate: step 1/1. In terms of biological role, involved in the gluconeogenesis. Catalyzes stereospecifically the conversion of dihydroxyacetone phosphate (DHAP) to D-glyceraldehyde-3-phosphate (G3P). The protein is Triosephosphate isomerase of Bradyrhizobium sp. (strain ORS 278).